A 399-amino-acid polypeptide reads, in one-letter code: Ornithine aminotransferase (399 aa).

Residue Lys255 is modified to N6-(pyridoxal phosphate)lysine.

The protein belongs to the class-III pyridoxal-phosphate-dependent aminotransferase family. OAT subfamily. Pyridoxal 5'-phosphate is required as a cofactor.

It is found in the cytoplasm. The enzyme catalyses a 2-oxocarboxylate + L-ornithine = L-glutamate 5-semialdehyde + an L-alpha-amino acid. Its pathway is amino-acid biosynthesis; L-proline biosynthesis; L-glutamate 5-semialdehyde from L-ornithine: step 1/1. Its function is as follows. Catalyzes the interconversion of ornithine to glutamate semialdehyde. In Brevibacillus brevis (strain 47 / JCM 6285 / NBRC 100599), this protein is Ornithine aminotransferase.